Reading from the N-terminus, the 200-residue chain is NAD(P)H dehydrogenase (quinone) (200 aa).

In terms of domain architecture, Flavodoxin-like spans 4 to 191; sequence VLVLYYSSYG…DIARYQGKHV (188 aa). FMN is bound by residues 10–15 and 79–81; these read SSYGHV and TRF. Tyrosine 12 is an NAD(+) binding site. Tryptophan 99 contacts substrate. Residues 114 to 120 and histidine 135 each bind FMN; that span reads STGTQHG.

This sequence belongs to the WrbA family. FMN is required as a cofactor.

It carries out the reaction a quinone + NADH + H(+) = a quinol + NAD(+). The catalysed reaction is a quinone + NADPH + H(+) = a quinol + NADP(+). This Burkholderia ambifaria (strain MC40-6) protein is NAD(P)H dehydrogenase (quinone).